The following is a 344-amino-acid chain: Meiotic expression up-regulated protein 26 (344 aa).

The protein resides in the nucleus. The protein is Meiotic expression up-regulated protein 26 (meu26) of Schizosaccharomyces pombe (strain 972 / ATCC 24843) (Fission yeast).